The following is a 177-amino-acid chain: Ribosome maturation factor RimM (177 aa).

Residues 104–177 enclose the PRC barrel domain; sequence GVDGIWADLI…IIKVKLMEGM (74 aa).

This sequence belongs to the RimM family. As to quaternary structure, binds ribosomal protein uS19.

It localises to the cytoplasm. An accessory protein needed during the final step in the assembly of 30S ribosomal subunit, possibly for assembly of the head region. Essential for efficient processing of 16S rRNA. May be needed both before and after RbfA during the maturation of 16S rRNA. It has affinity for free ribosomal 30S subunits but not for 70S ribosomes. This Magnetococcus marinus (strain ATCC BAA-1437 / JCM 17883 / MC-1) protein is Ribosome maturation factor RimM.